The sequence spans 899 residues: Suppressor of glycerol defect protein 1 (899 aa).

Residues 24–33 show a composition bias toward basic and acidic residues; sequence QDERFSISEG. Disordered stretches follow at residues 24 to 181 and 248 to 326; these read QDER…VSYP and ETNS…DDSE. Basic residues predominate over residues 34–49; it reads KKRRRGNGKHLSRKEK. The segment covering 65–77 has biased composition (polar residues); sequence REINSSRLKSAPT. Residues 103–126 show a composition bias toward acidic residues; sequence DESESNENWDSDEVLTDEVAEESG. Composition is skewed to basic and acidic residues over residues 134 to 143, 162 to 174, and 251 to 264; these read ETMKKLESLK, SYEKKHIRNRDTN, and SMRKDDEASEKAFS. The segment covering 265–292 has biased composition (acidic residues); the sequence is SDDDLSASDFEDSDGLSESDNDSVADSD. The MIF4G domain occupies 335–540; that stretch reads SKKVNSSLNK…DTMSDLKNNR (206 aa). Positions 644 to 781 constitute an MI domain; that stretch reads DIRRAIFISI…KLDVFKHVPF (138 aa). S736 bears the Phosphoserine mark.

This sequence belongs to the CWC22 family. As to quaternary structure, interacts with PLC1.

Its subcellular location is the nucleus. The protein localises to the nucleolus. Involved in osmoregulatory glycerol response, probably through its interaction with PLC1 which regulates the expression of GDP1. The sequence is that of Suppressor of glycerol defect protein 1 (SGD1) from Saccharomyces cerevisiae (strain ATCC 204508 / S288c) (Baker's yeast).